A 476-amino-acid chain; its full sequence is CDK5 and ABL1 enzyme substrate 2 (476 aa).

Residues 1 to 119 are disordered; that stretch reads MAAAAAGGAP…GLGLDGQRQR (119 aa). Residues 30-40 are compositionally biased toward basic residues; the sequence is PRRRGDSRRRQ. A compositionally biased stretch (pro residues) spans 65-96; it reads PAPPPPPPTEAREAPAPPPAPPGGLPGLPARP. Ser-128 and Ser-206 each carry phosphoserine. The interval 256–295 is disordered; that stretch reads DSHGLLPQPRPSIPRAPPGSRHKPVPTKSTPAGTELGSDG. A compositionally biased stretch (pro residues) spans 263 to 272; it reads QPRPSIPRAP.

The protein belongs to the cyclin family. In terms of assembly, binds to CDK3, CDK5 and ABL1. The C-terminal cyclin-box-like region binds to CDK5. As to expression, widely expressed.

Its function is as follows. Unknown. Probably involved in G1-S cell cycle transition. This Mus musculus (Mouse) protein is CDK5 and ABL1 enzyme substrate 2 (Cables2).